The sequence spans 344 residues: Estradiol 17-beta-dehydrogenase 1 (344 aa).

Residue 3-32 (STVVLITGCSSGIGLHLAVRLASDRSQSFK) coordinates NAD(+). Ser143 is a binding site for substrate. Catalysis depends on Tyr156, which acts as the Proton acceptor.

The protein belongs to the short-chain dehydrogenases/reductases (SDR) family. As to quaternary structure, homodimer.

It is found in the cytoplasm. The catalysed reaction is 17beta-estradiol + NAD(+) = estrone + NADH + H(+). The enzyme catalyses 17beta-estradiol + NADP(+) = estrone + NADPH + H(+). The protein operates within steroid biosynthesis; estrogen biosynthesis. Its function is as follows. Favors the reduction of estrogens and androgens. Uses preferentially NADH. The sequence is that of Estradiol 17-beta-dehydrogenase 1 (Hsd17b1) from Rattus norvegicus (Rat).